The primary structure comprises 1314 residues: AT-rich interactive domain-containing protein 4B (1314 aa).

Disordered stretches follow at residues 123 to 169 and 266 to 306; these read LPLT…RKQT and KTEL…EPFP. Ser276, Ser295, and Ser296 each carry phosphoserine. Residues 277-305 are compositionally biased toward acidic residues; sequence EAEEEEEEEDDEKEKEDNSSEEEEEIEPF. Residues 306–398 enclose the ARID domain; that stretch reads PEERENFLQQ…YLYGFEEYCR (93 aa). Glycyl lysine isopeptide (Lys-Gly) (interchain with G-Cter in SUMO2) cross-links involve residues Lys428 and Lys461. The span at 439 to 464 shows a compositional bias: basic and acidic residues; the sequence is NVEDSKNVMPKEETPAEDESERKENI. Disordered regions lie at residues 439-577, 635-678, 709-888, 943-1215, and 1256-1290; these read NVED…KVQV, IKHR…SPEM, ASES…EEKR, KELF…RLPK, and VASI…SITA. At Ser482 the chain carries Phosphoserine. The span at 486-511 shows a compositional bias: basic and acidic residues; the sequence is KEAHITKLEENENLEDKDGGRARTEE. Over residues 531 to 567 the composition is skewed to acidic residues; sequence NKEEDEDDEEIEEEEEEDEEEDEDEDDDDNNEEEEFE. A Tudor-knot domain is found at 572-624; that stretch reads GMKVQVRYGRGKNQKMYEASIKDSDVEGGEALYLVHYCGWNVRYDEWIKADKI. Residues 643–656 show a composition bias toward basic and acidic residues; that stretch reads NKLDKEKDRDEKYS. Phosphoserine occurs at positions 666, 668, 675, and 717. 2 stretches are compositionally biased toward basic and acidic residues: residues 722-754 and 778-787; these read ERCT…KEEQ and SPERLRKDME. Residue Lys751 forms a Glycyl lysine isopeptide (Lys-Gly) (interchain with G-Cter in SUMO2) linkage. A phosphoserine mark is found at Ser778 and Ser790. Positions 788-800 are enriched in acidic residues; the sequence is AISEDTDFEEEDE. The residue at position 793 (Thr793) is a Phosphothreonine. 3 stretches are compositionally biased toward basic and acidic residues: residues 808 to 817, 841 to 853, and 997 to 1012; these read VKKDTTDKAL, GKKE…KEPL, and KPIE…RKTE. The span at 1013 to 1023 shows a compositional bias: polar residues; it reads FPSSGSNSVLN. Ser1016 carries the post-translational modification Phosphoserine. Thr1028 carries the phosphothreonine modification. Positions 1030–1051 are enriched in low complexity; it reads ESPSSVTITEASQQQSSVTVSV. A Phosphoserine modification is found at Ser1031. Residues 1058–1067 show a composition bias toward basic and acidic residues; it reads EEVRSIKSET. Residues 1089–1103 show a composition bias toward low complexity; sequence SSPAGFDASVSSSSS. Residues 1132-1150 are compositionally biased toward basic residues; the sequence is KKQKRSHKATVVNNKKKGK. A Phosphothreonine modification is found at Thr1152. Phosphoserine occurs at positions 1154, 1155, 1157, and 1161. Polar residues predominate over residues 1164-1186; that stretch reads ESVTKTQTIKSVPTGMKTHNSKS. The segment covering 1198-1210 has biased composition (basic and acidic residues); it reads RNGDKDPDLKEPS. Residues 1227–1272 adopt a coiled-coil conformation; sequence ENMTSAERISILQEKLQEIRKHYLSLKSEVASIDRRRKRLKKKERE. Over residues 1274 to 1290 the composition is skewed to low complexity; the sequence is AATSSSSSSPSSSSITA.

As to quaternary structure, component of a Sin3A corepressor complex consisting of SIN3A, SAP130, SUDS3/SAP45, SAP180, HDAC1 and HDAC2. Interacts with ARID4A. Interacts with AR. In terms of tissue distribution, expressed in Sertoli cells of the testis.

The protein resides in the nucleus. Acts as a transcriptional repressor. May function in the assembly and/or enzymatic activity of the Sin3A corepressor complex or in mediating interactions between the complex and other regulatory complexes. Plays a role in the regulation of epigenetic modifications at the PWS/AS imprinting center near the SNRPN promoter, where it might function as part of a complex with RB1 and ARID4A. Involved in spermatogenesis, together with ARID4A, where it functions as a transcriptional coactivator for AR (androgen receptor) and enhances expression of genes required for sperm maturation. Regulates expression of the tight junction protein CLDN3 in the testis, which is important for integrity of the blood-testis barrier. Plays a role in myeloid homeostasis where it regulates the histone methylation state of bone marrow cells and expression of various genes involved in hematopoiesis. May function as a leukemia suppressor. The sequence is that of AT-rich interactive domain-containing protein 4B (Arid4b) from Mus musculus (Mouse).